The chain runs to 95 residues: NADH-quinone oxidoreductase subunit 11 (95 aa).

3 consecutive transmembrane segments (helical) span residues 1–21 (MSYL…VLTR), 25–45 (ILVF…LVGF), and 59–79 (MVIA…VAIF).

The protein belongs to the complex I subunit 4L family. NDH-1 is composed of 15 different subunits, Nqo1 to Nqo15. The complex has a L-shaped structure, with the hydrophobic arm (subunits Nqo7, Nqo8 and Nqo10 to Nqo14) embedded in the membrane and the hydrophilic peripheral arm (subunits Nqo1 to Nqo6, Nqo9 and Nqo15) protruding into the bacterial cytoplasm. The hydrophilic domain contains all the redox centers.

It localises to the cell inner membrane. It carries out the reaction a quinone + NADH + 5 H(+)(in) = a quinol + NAD(+) + 4 H(+)(out). Its function is as follows. NDH-1 shuttles electrons from NADH, via FMN and iron-sulfur (Fe-S) centers, to quinones in the respiratory chain. The immediate electron acceptor for the enzyme in this species is menaquinone. Couples the redox reaction to proton translocation (for every two electrons transferred, four hydrogen ions are translocated across the cytoplasmic membrane), and thus conserves the redox energy in a proton gradient required for the synthesis of ATP. The polypeptide is NADH-quinone oxidoreductase subunit 11 (nqo11) (Thermus thermophilus (strain ATCC 27634 / DSM 579 / HB8)).